The sequence spans 362 residues: Putative G-protein coupled receptor B0244.5 (362 aa).

The Extracellular portion of the chain corresponds to 1–47 (MQNIFENCSYHSKYEPYFLNCTNTTNQCVLIQDVGIIQAIDFWANLC). N-linked (GlcNAc...) asparagine glycosylation is found at asparagine 7, asparagine 20, and asparagine 23. A helical membrane pass occupies residues 48–68 (IPFTLFVIAFILNGYYLSILI). Topologically, residues 69-81 (PEFRKMNDTTKKQ) are cytoplasmic. The helical transmembrane segment at 82–102 (YIFVVSRGISSLSASSIMMVL) threads the bilayer. At 103–125 (RLLKMLSTSFTVYFLFFLIDDLS) the chain is on the extracellular side. Residues 126–145 (FYSLLGSYVGSTLLLYLATV) traverse the membrane as a helical segment. Over 146–161 (RPIFYSIQISVRIVYK) the chain is Cytoplasmic. Residues 162–182 (FALVNVLLAVVLAVTTAIFQA) traverse the membrane as a helical segment. Topologically, residues 183–204 (AEVSDGFFHCDVQHCQPIINIA) are extracellular. Residues 205-225 (MFVIIATSFLIPIITLTFVLV) form a helical membrane-spanning segment. Residues 226–255 (TLCFQKSRTQSIGNFTVDNSVYKSARTRLA) lie on the Cytoplasmic side of the membrane. A helical membrane pass occupies residues 256-276 (WTLFTFTLISLTEMIPSSFLV). At 277–295 (NLRVEDTITICVNFYQADH) the chain is on the extracellular side. The helical transmembrane segment at 296–316 (LFIPAIMNSFQTLAWGIALIV) threads the bilayer. Over 317-362 (DPLCALLFDPRIRKVWVEHVSRLSIIIGRSFEACCHSNLNKEIQDK) the chain is Cytoplasmic.

Belongs to the G-protein coupled receptor 1 family. B0244 subfamily.

It is found in the cell membrane. The polypeptide is Putative G-protein coupled receptor B0244.5 (Caenorhabditis elegans).